We begin with the raw amino-acid sequence, 296 residues long: Maltose/maltodextrin transport system permease protein MalG (296 aa).

Residues Met1–Arg12 lie on the Cytoplasmic side of the membrane. The chain crosses the membrane as a helical span at residues Leu13–Ile35. Topologically, residues Thr36 to Ser88 are periplasmic. Positions Leu85–Ala281 constitute an ABC transmembrane type-1 domain. Residues Val89 to Ala111 traverse the membrane as a helical segment. Topologically, residues Arg112–Lys123 are cytoplasmic. Residues Gly124–Leu143 traverse the membrane as a helical segment. Residues Phe144–Pro152 are Periplasmic-facing. A helical membrane pass occupies residues Phe153–Trp175. The Cytoplasmic segment spans residues Thr176–Met205. Residues Val206–Thr228 traverse the membrane as a helical segment. The Periplasmic segment spans residues Glu229–Asn257. A helical transmembrane segment spans residues Tyr258–Val280. The Cytoplasmic segment spans residues Ala281–Gly296.

It belongs to the binding-protein-dependent transport system permease family. MalFG subfamily. In terms of assembly, the complex is composed of two ATP-binding proteins (MalK), two transmembrane proteins (MalG and MalF) and a solute-binding protein (MalE).

Its subcellular location is the cell inner membrane. Its function is as follows. Part of the ABC transporter complex MalEFGK involved in maltose/maltodextrin import. Probably responsible for the translocation of the substrate across the membrane. The polypeptide is Maltose/maltodextrin transport system permease protein MalG (malG) (Photorhabdus laumondii subsp. laumondii (strain DSM 15139 / CIP 105565 / TT01) (Photorhabdus luminescens subsp. laumondii)).